The chain runs to 91 residues: Small ribosomal subunit protein uS15 (91 aa).

Belongs to the universal ribosomal protein uS15 family. In terms of assembly, part of the 30S ribosomal subunit. Forms a bridge to the 50S subunit in the 70S ribosome, contacting the 23S rRNA.

In terms of biological role, one of the primary rRNA binding proteins, it binds directly to 16S rRNA where it helps nucleate assembly of the platform of the 30S subunit by binding and bridging several RNA helices of the 16S rRNA. Forms an intersubunit bridge (bridge B4) with the 23S rRNA of the 50S subunit in the ribosome. This chain is Small ribosomal subunit protein uS15, found in Rickettsia akari (strain Hartford).